A 513-amino-acid chain; its full sequence is Histidine ammonia-lyase (513 aa).

A cross-link (5-imidazolinone (Ala-Gly)) is located at residues 144 to 146; sequence ASG. Ser-145 is subject to 2,3-didehydroalanine (Ser).

This sequence belongs to the PAL/histidase family. In terms of processing, contains an active site 4-methylidene-imidazol-5-one (MIO), which is formed autocatalytically by cyclization and dehydration of residues Ala-Ser-Gly.

Its subcellular location is the cytoplasm. It carries out the reaction L-histidine = trans-urocanate + NH4(+). The protein operates within amino-acid degradation; L-histidine degradation into L-glutamate; N-formimidoyl-L-glutamate from L-histidine: step 1/3. This Streptococcus pyogenes serotype M49 (strain NZ131) protein is Histidine ammonia-lyase.